A 244-amino-acid polypeptide reads, in one-letter code: Signal recognition particle receptor subunit beta (244 aa).

Residues 7–23 (IIACLLVIGTTIALIAV) form a helical membrane-spanning segment. Residues 45-53 (GPQNSGKTS), 66-69 (TVVS), G90, and 154-157 (NKSE) contribute to the GTP site.

This sequence belongs to the SRP receptor beta subunit family. In terms of assembly, heterodimer of an alpha and a beta chain.

It localises to the endoplasmic reticulum membrane. In terms of biological role, component of the signal recognition particle (SRP) complex receptor (SR). Ensures, in conjunction with the SRP complex, the correct targeting of the nascent secretory proteins to the endoplasmic reticulum membrane system. May mediate the membrane association of SR. The protein is Signal recognition particle receptor subunit beta (SRP102) of Saccharomyces cerevisiae (strain ATCC 204508 / S288c) (Baker's yeast).